The primary structure comprises 373 residues: Glutamine synthetase (373 aa).

Ala2 carries the N-acetylalanine modification. The required for glutamine-induced ubiquitination by CRL4(CRBN) and proteasomal degradation stretch occupies residues 2–25; it reads ATSASSHLNKGIKQMYMSLPQGEK. Lys11 and Lys14 each carry N6-acetyllysine. Residues 24–106 enclose the GS beta-grasp domain; that stretch reads EKVQAMYIWV…VFCEVFKYNQ (83 aa). Residue Tyr104 is modified to Phosphotyrosine. In terms of domain architecture, GS catalytic spans 113 to 373; it reads LRHTCKRIMD…TGDQPFQYKN (261 aa). Glu134 contacts ATP. Positions 134, 136, 196, and 203 each coordinate Mn(2+). Residue 203–208 participates in ATP binding; it reads EFQIGP. 246-247 contacts L-glutamate; that stretch reads NW. Position 253 (His253) interacts with Mn(2+). Residues 255–257, Arg319, and Arg324 each bind ATP; that span reads NFS. Arg319 serves as a coordination point for L-glutamate. ADP is bound at residue 336 to 338; it reads YFE. Mn(2+) is bound at residue Glu338. L-glutamate is bound at residue Arg340. Ser343 carries the phosphoserine modification.

The protein belongs to the glutamine synthetase family. As to quaternary structure, decamer; composed of two pentamers. Interacts with PALMD. Interacts with RHOJ. Interacts with BEST2; this interaction tethers a fraction of GLUL to the membrane, causing a decrease of cytosolic glutamine synthase (GS) activity and inhibits the chloride channel activity of BEST2 by affecting the gating at the aperture in the absence of intracellular glutamate. It depends on Mg(2+) as a cofactor. Mn(2+) is required as a cofactor. Palmitoylated; undergoes autopalmitoylation. In terms of processing, acetylated by EP300/p300; acetylation is stimulated by increased glutamine levels and promotes ubiquitin-mediated proteasomal degradation. Post-translationally, ubiquitinated by ZNRF1. Ubiquitinated by the DCX (DDB1-CUL4-X-box) E3 ubiquitin-protein ligase complex called CRL4(CRBN), leading to proteasomal degradation.

The protein localises to the cytoplasm. Its subcellular location is the cytosol. The protein resides in the microsome. It localises to the mitochondrion. It is found in the cell membrane. The catalysed reaction is L-glutamate + NH4(+) + ATP = L-glutamine + ADP + phosphate + H(+). It carries out the reaction L-cysteinyl-[protein] + hexadecanoyl-CoA = S-hexadecanoyl-L-cysteinyl-[protein] + CoA. With respect to regulation, glutamine synthetase activity is inhibited by methionine sulfoximine (MSO). In terms of biological role, glutamine synthetase that catalyzes the ATP-dependent conversion of glutamate and ammonia to glutamine. Its role depends on tissue localization: in the brain, it regulates the levels of toxic ammonia and converts neurotoxic glutamate to harmless glutamine, whereas in the liver, it is one of the enzymes responsible for the removal of ammonia. Plays a key role in ammonium detoxification during erythropoiesis: the glutamine synthetase activity is required to remove ammonium generated by porphobilinogen deaminase (HMBS) during heme biosynthesis to prevent ammonium accumulation and oxidative stress. Essential for proliferation of fetal skin fibroblasts. Independently of its glutamine synthetase activity, required for endothelial cell migration during vascular development. Involved in angiogenesis by regulating membrane localization and activation of the GTPase RHOJ, possibly by promoting RHOJ palmitoylation. May act as a palmitoyltransferase for RHOJ: able to autopalmitoylate and then transfer the palmitoyl group to RHOJ. Plays a role in ribosomal 40S subunit biogenesis. Through the interaction with BEST2, inhibits BEST2 channel activity by affecting the gating at the aperture in the absence of intracellular L-glutamate, but sensitizes BEST2 to intracellular L-glutamate, which promotes the opening of BEST2 and thus relieves its inhibitory effect on BEST2. This chain is Glutamine synthetase, found in Cricetulus griseus (Chinese hamster).